A 990-amino-acid chain; its full sequence is Sister chromatid cohesion protein PDS5 homolog E (990 aa).

5 HEAT repeats span residues 31–57 (DATL…SVQK), 58–96 (ALHP…ITAP), 153–190 (DLVL…DESE), 191–228 (EVPM…SCTC), and 232–269 (PCIM…HNDV). The disordered stretch occupies residues 262–565 (TTQAHNDVKP…AGEEVESNTN (304 aa)). The span at 267–281 (NDVKPKDNEADEKIS) shows a compositional bias: basic and acidic residues. The segment covering 302–314 (KGTRSKRSARGGT) has biased composition (basic residues). Polar residues-rich tracts occupy residues 328-342 (EGLS…ASGS) and 394-410 (VGQT…SSGR). Composition is skewed to basic and acidic residues over residues 421–430 (TKMEETDHDV), 448–477 (PAKE…EKAD), and 503–512 (VHSDAKKKNS). A Nuclear localization signal 1 motif is present at residues 458-465 (VKKHEDGI). 2 consecutive short sequence motifs (nuclear localization signal) follow at residues 539–546 (TKKSEQAP) and 583–590 (DKKFYEGV). The segment at 653–966 (KKRKIVSKNV…VGNEAEEDDQ (314 aa)) is disordered. The segment covering 662 to 673 (VEPSSSPEVRSS) has biased composition (low complexity). Short sequence motifs (nuclear localization signal) lie at residues 677–684 (MKKKDSVT) and 715–722 (LKKLNGEP). Positions 727–742 (GRTGKKQKVTQAMHRK) are enriched in basic residues. A compositionally biased stretch (acidic residues) spans 746 to 760 (DCDEQEDLETKDEED). 3 stretches are compositionally biased toward basic and acidic residues: residues 761-810 (SLKL…KTNG), 819-890 (TDGK…KETN), and 898-947 (EEQK…DKET).

Belongs to the PDS5 family. In terms of assembly, interacts with the cohesin complex.

It is found in the nucleus. Cohesin cofactor dispensable during the meiotic division but playing an important role in DNA repair by homologous recombination (HR) probably by helping SMC5/SMC6 complex. Regulator of sister chromatid cohesion in mitosis which may stabilize cohesin complex association with chromatin. May couple sister chromatid cohesion during mitosis to DNA replication. Cohesion ensures that chromosome partitioning is accurate in both meiotic and mitotic cells and plays an important role in DNA repair. This is Sister chromatid cohesion protein PDS5 homolog E from Arabidopsis thaliana (Mouse-ear cress).